A 350-amino-acid chain; its full sequence is Ferredoxin--NADP reductase (350 aa).

FAD contacts are provided by Thr-14, Asp-33, Gln-41, Tyr-46, Ala-86, Phe-121, Asp-286, and Thr-327.

It belongs to the ferredoxin--NADP reductase type 2 family. Homodimer. FAD is required as a cofactor.

It catalyses the reaction 2 reduced [2Fe-2S]-[ferredoxin] + NADP(+) + H(+) = 2 oxidized [2Fe-2S]-[ferredoxin] + NADPH. In Flavobacterium johnsoniae (strain ATCC 17061 / DSM 2064 / JCM 8514 / BCRC 14874 / CCUG 350202 / NBRC 14942 / NCIMB 11054 / UW101) (Cytophaga johnsonae), this protein is Ferredoxin--NADP reductase.